The primary structure comprises 246 residues: 4-hydroxy-tetrahydrodipicolinate reductase (246 aa).

NAD(+) is bound by residues 8-13 (GAKGRM), 74-76 (GTT), and 101-104 (APNF). Catalysis depends on H131, which acts as the Proton donor/acceptor. Residue H132 participates in (S)-2,3,4,5-tetrahydrodipicolinate binding. Catalysis depends on K135, which acts as the Proton donor. 141–142 (GT) is a binding site for (S)-2,3,4,5-tetrahydrodipicolinate.

It belongs to the DapB family.

Its subcellular location is the cytoplasm. The enzyme catalyses (S)-2,3,4,5-tetrahydrodipicolinate + NAD(+) + H2O = (2S,4S)-4-hydroxy-2,3,4,5-tetrahydrodipicolinate + NADH + H(+). It catalyses the reaction (S)-2,3,4,5-tetrahydrodipicolinate + NADP(+) + H2O = (2S,4S)-4-hydroxy-2,3,4,5-tetrahydrodipicolinate + NADPH + H(+). The protein operates within amino-acid biosynthesis; L-lysine biosynthesis via DAP pathway; (S)-tetrahydrodipicolinate from L-aspartate: step 4/4. Its function is as follows. Catalyzes the conversion of 4-hydroxy-tetrahydrodipicolinate (HTPA) to tetrahydrodipicolinate. In Cutibacterium acnes (strain DSM 16379 / KPA171202) (Propionibacterium acnes), this protein is 4-hydroxy-tetrahydrodipicolinate reductase.